Here is a 317-residue protein sequence, read N- to C-terminus: Protein IMPACT-B (317 aa).

The RWD domain occupies 17–118 (EEIEALSSIY…EKIREFLTEK (102 aa)). The tract at residues 296–317 (DSTEETSKAGGKSKKPKSKKTK) is disordered. Positions 306–317 (GKSKKPKSKKTK) are enriched in basic residues.

It belongs to the IMPACT family. As to quaternary structure, interacts with GCN1; prevents the interaction of GCN1 with EIF2AK4/GCN2 and inhibits EIF2AK4/GCN2 kinase activity. Interaction with RPL39; this interaction occurs in a GCN1-independent manner. Associates with ribosomes; this interaction occurs in a GCN1-independent manner. Associates with actin; this interaction occurs in a GCN1-independent manner.

The protein localises to the cytoplasm. Functionally, translational regulator that ensures constant high levels of translation upon a variety of stress conditions, such as amino acid starvation, UV-C irradiation, proteasome inhibitor treatment and glucose deprivation. Plays a role as a negative regulator of the EIF2AK4/GCN2 kinase activity; impairs GCN1-mediated EIF2AK4/GCN2 activation, and hence EIF2AK4/GCN2-mediated eIF-2-alpha phosphorylation and subsequent down-regulation of protein synthesis. Plays a role in differentiation of neuronal cells by stimulating neurite outgrowth. This chain is Protein IMPACT-B (impact-B), found in Xenopus tropicalis (Western clawed frog).